Reading from the N-terminus, the 351-residue chain is Peptide chain release factor 1 (351 aa).

Position 229 is an N5-methylglutamine (glutamine 229). A disordered region spans residues 278 to 297; sequence RVDDERSADRAAQVGSGDRS.

Belongs to the prokaryotic/mitochondrial release factor family. Post-translationally, methylated by PrmC. Methylation increases the termination efficiency of RF1.

The protein localises to the cytoplasm. Peptide chain release factor 1 directs the termination of translation in response to the peptide chain termination codons UAG and UAA. This chain is Peptide chain release factor 1, found in Roseobacter denitrificans (strain ATCC 33942 / OCh 114) (Erythrobacter sp. (strain OCh 114)).